The following is a 381-amino-acid chain: MALEEISERLQVSDFPTLGMAANYDLRRHKFESLANDGSHEMRADVRRWVGNPSDFGGCNPINGHIIALTMPMIKPDRVKIAGYIYECWFLYSWDLTTTLTGADGFFHDDILEGTNEGVSDTDAFGLGTADQDAKARDGRKQIQAKMMYLLETTDKACAKHLQKVWSNMLVTTIQHKSRDFETLKEYIDFRIRDCGALFGEGVMLFGMGLALTEKDREDVASTIYPCYAALGLTNDYFSFDREWEEAKRTGEAKFSNAVRLFMDWQSTGAAAAKEVVRKAIIEYEREFLELREKFVKANPKAERLHKFLEAMVYQISGHVVWSINCPRYNPSFRYDPNSGVENQVLAERRGKSSSKKPSVMIEEIDEKSHLASETGPAMIA.

This sequence belongs to the terpene synthase family.

The protein operates within mycotoxin biosynthesis. Its function is as follows. Terpene cyclase; part of the core atranone cluster (CAC) which products are predicted to catalyze most or all steps of mycotoxin atranone synthesis, starting from geranylgeranyl pyrophosphate (GGPP). The initial cyclization of GGPP to dolabellane is probably performed by the terpene cyclase ATR13. The Baeyer-Villiger oxidation near the end of the atranone synthesis, which converts atranones D and E to atranones F and G is predicted to be catalyzed by the monooxygenase ATR8. Of the CAC's other predicted gene products, the reducing PKS ATR6 might synthesize a polyketide chain. This polyketide is probably transferred onto the atranone backbone by the polyketide transferase ATR5. Other predicted CAC products include 4 oxygenases (ATR2, ATR3, ATR4, and ATR14), 3 short-chain reductases (ATR7, ATR9, and ATR10), and a methyltransferase (ATR12). These may all be involved in the various steps of atranone biosynthesis, although their specific roles must await experimental determination. This chain is Terpene cyclase ATR13, found in Stachybotrys chlorohalonatus (strain IBT 40285).